Consider the following 330-residue polypeptide: Putative zinc finger protein CONSTANS-LIKE 11 (330 aa).

C5, C8, C28, and H33 together coordinate Zn(2+). A B box-type 1; atypical zinc finger spans residues 5-47 (CDFCGTEKALIYCKSDSAKLCLNCDVNVHSANPLSQRHTRSLL). Residues 48-88 (CEKCSLQPTAVHCMNENVSLCQGCQWTASNCTGLGHRLQSL) form a B box-type 2; degenerate zinc finger. Residues 276-318 (RDEAKKRYKQKKSKRMFGKQIRYASRKARADTRKRVKGRFVKS) enclose the CCT domain.

This sequence belongs to the CONSTANS family.

The protein localises to the nucleus. This chain is Putative zinc finger protein CONSTANS-LIKE 11 (COL11), found in Arabidopsis thaliana (Mouse-ear cress).